Consider the following 194-residue polypeptide: dTTP/UTP pyrophosphatase (194 aa).

The Proton acceptor role is filled by D73.

This sequence belongs to the Maf family. YhdE subfamily. The cofactor is a divalent metal cation.

Its subcellular location is the cytoplasm. It catalyses the reaction dTTP + H2O = dTMP + diphosphate + H(+). The enzyme catalyses UTP + H2O = UMP + diphosphate + H(+). Nucleoside triphosphate pyrophosphatase that hydrolyzes dTTP and UTP. May have a dual role in cell division arrest and in preventing the incorporation of modified nucleotides into cellular nucleic acids. The polypeptide is dTTP/UTP pyrophosphatase (Geotalea uraniireducens (strain Rf4) (Geobacter uraniireducens)).